The primary structure comprises 1048 residues: Integrin alpha-V (1048 aa).

The N-terminal stretch at 1-30 (MAFPPRRRLRLGPRGLPLLLSGLLLPLCRA) is a signal peptide. At 31–992 (FNLDVESPAE…WGIQPAPMPV (962 aa)) the chain is on the extracellular side. FG-GAP repeat units lie at residues 32–98 (NLDV…RRCQ), 109–170 (DYAK…VEYA), 173–225 (RSKN…VSKY), 237–291 (QLAT…GKNM), 292–357 (SSLH…GDFQ), 358–415 (TIKL…GLNA), and 419–482 (QILE…VYPS). Asn74 is a glycosylation site (N-linked (GlcNAc...) asparagine). Intrachain disulfides connect Cys89/Cys97, Cys138/Cys158, and Cys172/Cys185. Ca(2+)-binding residues include Asp260, Asn262, Asp264, Ile266, and Asp268. Asn290 and Asn296 each carry an N-linked (GlcNAc...) asparagine glycan. Residues Asp314, Asn316, Asp318, Tyr320, Asp322, Asp379, Asp381, Asp383, Phe385, Asp387, Asp443, Asp445, Asn447, Tyr449, and Asp451 each coordinate Ca(2+). The N-linked (GlcNAc...) asparagine glycan is linked to Asn488. 2 cysteine pairs are disulfide-bonded: Cys491–Cys502 and Cys508–Cys565. Asn554 and Asn615 each carry an N-linked (GlcNAc...) asparagine glycan. 2 cysteine pairs are disulfide-bonded: Cys626–Cys632 and Cys698–Cys711. Asn704, Asn835, Asn851, and Asn874 each carry an N-linked (GlcNAc...) asparagine glycan. Disulfide bonds link Cys852–Cys914 and Cys904–Cys909. Residues Asn945, Asn973, and Asn980 are each glycosylated (N-linked (GlcNAc...) asparagine). A helical membrane pass occupies residues 993–1016 (PVWVIILAVLAGLLLLAVLVFVMY). Residues 1017-1048 (RMGFFKRVRPPQEEQEREQLQPHENGEGNSET) lie on the Cytoplasmic side of the membrane. Positions 1019–1023 (GFFKR) match the GFFKR motif motif. The segment covering 1027 to 1042 (PQEEQEREQLQPHENG) has biased composition (basic and acidic residues). The segment at 1027–1048 (PQEEQEREQLQPHENGEGNSET) is disordered.

Belongs to the integrin alpha chain family. In terms of assembly, heterodimer of an alpha and a beta subunit. The alpha subunit is composed of a heavy and a light chain linked by a disulfide bond. Alpha-V (ITGAV) associates with either beta-1 (ITGB1), beta-3 (ITGB3), beta-5 (ITGB5), beta-6 (ITGB6) or beta-8 (ITGB8). Interacts with RAB25. Interacts with CIB1. Integrins ITGAV:ITGB3 and ITGAV:ITGB5 interact with FBLN5 (via N-terminus). ITGAV:ITGB3 and ITGAV:ITGB5 interact with CCN3. ITGAV:ITGB3 interacts with ADGRA2. ITGAV:ITGB3 interacts with FGF2; it is likely that FGF2 can simultaneously bind ITGAV:ITGB3 and FGF receptors. ITGAV:ITGB3 interacts with SELP (via C-type lectin domain); the interaction mediates cell-cell interaction and adhesion. ITGAV:ITGB3 is found in a ternary complex with CX3CR1 and CX3CL1. ITGAV:ITGB3 is found in a ternary complex with NRG1 and ERBB3. ITGAV:ITGB3 is found in a ternary complex with FGF1 and FGFR1. ITGAV:ITGB3 is found in a ternary complex with IGF1 and IGF1R. ITGAV:ITGB3 interacts with IGF2. ITGAV:ITGB3 and ITGAV:ITGB6 interact with FBN1. ITGAV:ITGB3 interacts with CD9, CD81 and CD151 (via second extracellular domain). ITGAV:ITGB6 interacts with TGFB1. ITGAV:ITGB3 interacts with PTN. Forms a complex with PTPRZ1 and PTN that stimulates endothelial cell migration through ITGB3 'Tyr-773' phosphorylation. Interacts with TM4SF19. (Microbial infection) Alpha-V/beta-6 and alpha-V/beta-3 bind to foot-and-mouth disease virus (FMDV) VP1 protein and acts as a receptor for this virus.

The protein resides in the cell membrane. The protein localises to the cell junction. It is found in the focal adhesion. In terms of biological role, the alpha-V (ITGAV) integrins are receptors for vitronectin, cytotactin, fibronectin, fibrinogen, laminin, matrix metalloproteinase-2, osteopontin, osteomodulin, prothrombin, thrombospondin, TGFB1 and vWF. They recognize the sequence R-G-D in a wide array of ligands. Alpha-V integrins may play a role in embryo implantation, angiogenesis and wound healing. ITGAV:ITGB3 binds to fractalkine (CX3CL1) and may act as its coreceptor in CX3CR1-dependent fractalkine signaling. ITGAV:ITGB3 binds to NRG1 (via EGF domain) and this binding is essential for NRG1-ERBB signaling. ITGAV:ITGB3 binds to FGF1 and this binding is essential for FGF1 signaling. ITGAV:ITGB3 binds to FGF2 and this binding is essential for FGF2 signaling. ITGAV:ITGB3 binds to IGF1 and this binding is essential for IGF1 signaling. ITGAV:ITGB3 binds to IGF2 and this binding is essential for IGF2 signaling. ITGAV:ITGB3 binds to IL1B and this binding is essential for IL1B signaling. ITGAV:ITGB3 binds to PLA2G2A via a site (site 2) which is distinct from the classical ligand-binding site (site 1) and this induces integrin conformational changes and enhanced ligand binding to site 1. ITGAV:ITGB3 and ITGAV:ITGB6 act as receptors for fibrillin-1 (FBN1) and mediate R-G-D-dependent cell adhesion to FBN1. Integrin alpha-V/beta-6 or alpha-V/beta-8 (ITGAV:ITGB6 or ITGAV:ITGB8) mediates R-G-D-dependent release of transforming growth factor beta-1 (TGF-beta-1) from regulatory Latency-associated peptide (LAP), thereby playing a key role in TGF-beta-1 activation. ITGAV:ITGB3 acts as a receptor for CD40LG. ITGAV:ITGB3 acts as a receptor for IBSP and promotes cell adhesion and migration to IBSP. The polypeptide is Integrin alpha-V (ITGAV) (Bos taurus (Bovine)).